Reading from the N-terminus, the 660-residue chain is Transcription activator of gluconeogenesis CHGG_09150 (660 aa).

The span at 1-12 (MSDSENEYDETD) shows a compositional bias: acidic residues. Residues 1–52 (MSDSENEYDETDQLVKEEDEKMSDQRLTSEGADTSAEPKKKYDPKDPLRPRR) are disordered. Basic and acidic residues-rich tracts occupy residues 13–24 (QLVKEEDEKMSD) and 36–49 (AEPK…DPLR). The zn(2)-C6 fungal-type DNA-binding region spans 59–87 (CFACQRAHLTCGDERPCQRCIKRNLMESC). Disordered regions lie at residues 98–144 (LHDA…TFFS), 170–191 (FANQ…QISG), and 319–368 (PTSI…RQSN). Over residues 129 to 144 (SIQTSEASSNQGTFFS) the composition is skewed to polar residues. A compositionally biased stretch (low complexity) spans 173–184 (QQSPTSPSFQTS). Polar residues-rich tracts occupy residues 320 to 332 (TSIQ…TNSP) and 344 to 368 (TMAT…RQSN). Positions 455 to 526 (SLLEYEEFMH…NSKARVGLAT (72 aa)) constitute a PAS domain. The disordered stretch occupies residues 587–613 (APDKDDGTGESSTDGQLPQKDPRNSIL).

This sequence belongs to the ERT1/acuK family.

The protein localises to the nucleus. Transcription factor which regulates nonfermentable carbon utilization. Activator of gluconeogenetic genes. The chain is Transcription activator of gluconeogenesis CHGG_09150 from Chaetomium globosum (strain ATCC 6205 / CBS 148.51 / DSM 1962 / NBRC 6347 / NRRL 1970) (Soil fungus).